The sequence spans 366 residues: Protein lifeguard 1 (366 aa).

The segment at 1–141 (MSHEKSFLVS…GPPSYYDNQD (141 aa)) is disordered. Pro residues-rich tracts occupy residues 14-44 (YPPP…PFQP) and 67-109 (GPYP…PNPY). 7 helical membrane-spanning segments follow: residues 160–180 (VFLV…VFTF), 192–212 (VWTY…LSCC), 223–243 (LVAL…IASF), 248–268 (AVIM…IFSM), 278–298 (VGVL…CIFI), 302–322 (VLEI…LAVD), and 341–361 (FAAL…LTII).

This sequence belongs to the BI1 family. LFG subfamily.

It is found in the membrane. Potential apoptotic regulator. This chain is Protein lifeguard 1 (GRINA), found in Bos taurus (Bovine).